Reading from the N-terminus, the 376-residue chain is Chaperone protein DnaJ 2 (376 aa).

The 66-residue stretch at 5–70 (DYYEVLGVNR…QKRAAYDRYG (66 aa)) folds into the J domain. A CR-type zinc finger spans residues 135–213 (GADKTIRIPT…CGGAGRVKRQ (79 aa)). Zn(2+) is bound by residues Cys148, Cys151, Cys165, Cys168, Cys187, Cys190, Cys201, and Cys204. CXXCXGXG motif repeat units follow at residues 148–155 (CETCHGSG), 165–172 (CPTCGGAG), 187–194 (CPKCHGTG), and 201–208 (CRDCGGAG).

The protein belongs to the DnaJ family. As to quaternary structure, homodimer. It depends on Zn(2+) as a cofactor.

Its subcellular location is the cytoplasm. Participates actively in the response to hyperosmotic and heat shock by preventing the aggregation of stress-denatured proteins and by disaggregating proteins, also in an autonomous, DnaK-independent fashion. Unfolded proteins bind initially to DnaJ; upon interaction with the DnaJ-bound protein, DnaK hydrolyzes its bound ATP, resulting in the formation of a stable complex. GrpE releases ADP from DnaK; ATP binding to DnaK triggers the release of the substrate protein, thus completing the reaction cycle. Several rounds of ATP-dependent interactions between DnaJ, DnaK and GrpE are required for fully efficient folding. Also involved, together with DnaK and GrpE, in the DNA replication of plasmids through activation of initiation proteins. In Aromatoleum aromaticum (strain DSM 19018 / LMG 30748 / EbN1) (Azoarcus sp. (strain EbN1)), this protein is Chaperone protein DnaJ 2.